Consider the following 366-residue polypeptide: Holliday junction branch migration complex subunit RuvB (366 aa).

A disordered region spans residues 1-50 (MAIISSKKQPPEPNGEPKQRRESAKAPSTENILKPEAAIDEQEQQEEGIR). The interval 13-210 (PNGEPKQRRE…FGLIQKLRFY (198 aa)) is large ATPase domain (RuvB-L). Basic and acidic residues predominate over residues 15 to 24 (GEPKQRRESA). ATP contacts are provided by residues Ile-49, Arg-50, Gly-91, Lys-94, Thr-95, Thr-96, 157-159 (EDY), Arg-200, Tyr-210, and Arg-247. Thr-95 is a binding site for Mg(2+). A small ATPAse domain (RuvB-S) region spans residues 211 to 281 (EVDELTQIVL…IASEALQLFQ (71 aa)). Positions 284–366 (PCGLDWTDRQ…TPPNEQLSLL (83 aa)) are head domain (RuvB-H). Residues Arg-339 and Arg-344 each coordinate DNA.

It belongs to the RuvB family. As to quaternary structure, homohexamer. Forms an RuvA(8)-RuvB(12)-Holliday junction (HJ) complex. HJ DNA is sandwiched between 2 RuvA tetramers; dsDNA enters through RuvA and exits via RuvB. An RuvB hexamer assembles on each DNA strand where it exits the tetramer. Each RuvB hexamer is contacted by two RuvA subunits (via domain III) on 2 adjacent RuvB subunits; this complex drives branch migration. In the full resolvosome a probable DNA-RuvA(4)-RuvB(12)-RuvC(2) complex forms which resolves the HJ.

The protein localises to the cytoplasm. It carries out the reaction ATP + H2O = ADP + phosphate + H(+). Its function is as follows. The RuvA-RuvB-RuvC complex processes Holliday junction (HJ) DNA during genetic recombination and DNA repair, while the RuvA-RuvB complex plays an important role in the rescue of blocked DNA replication forks via replication fork reversal (RFR). RuvA specifically binds to HJ cruciform DNA, conferring on it an open structure. The RuvB hexamer acts as an ATP-dependent pump, pulling dsDNA into and through the RuvAB complex. RuvB forms 2 homohexamers on either side of HJ DNA bound by 1 or 2 RuvA tetramers; 4 subunits per hexamer contact DNA at a time. Coordinated motions by a converter formed by DNA-disengaged RuvB subunits stimulates ATP hydrolysis and nucleotide exchange. Immobilization of the converter enables RuvB to convert the ATP-contained energy into a lever motion, pulling 2 nucleotides of DNA out of the RuvA tetramer per ATP hydrolyzed, thus driving DNA branch migration. The RuvB motors rotate together with the DNA substrate, which together with the progressing nucleotide cycle form the mechanistic basis for DNA recombination by continuous HJ branch migration. Branch migration allows RuvC to scan DNA until it finds its consensus sequence, where it cleaves and resolves cruciform DNA. This chain is Holliday junction branch migration complex subunit RuvB, found in Nostoc punctiforme (strain ATCC 29133 / PCC 73102).